The following is a 49-amino-acid chain: MFRLLLNLLRHRVTYRFLVVLCAALGYASLTGDLSSLESVVCSILTCSD.

The signal sequence occupies residues 1–23 (MFRLLLNLLRHRVTYRFLVVLCA).

In Escherichia phage T7 (Bacteriophage T7), this protein is Protein 19.5.